We begin with the raw amino-acid sequence, 88 residues long: Small ribosomal subunit protein bS20 (88 aa).

Residues 1 to 33 (MANTSSAKKATRKIARRTAVNKSRRTQMRGSVR) are disordered.

This sequence belongs to the bacterial ribosomal protein bS20 family.

Functionally, binds directly to 16S ribosomal RNA. The sequence is that of Small ribosomal subunit protein bS20 from Rhodopseudomonas palustris (strain BisB5).